We begin with the raw amino-acid sequence, 285 residues long: NADPH-dependent 7-cyano-7-deazaguanine reductase (285 aa).

80–82 (VES) contacts substrate. Residue 82 to 83 (SK) coordinates NADPH. Residue cysteine 191 is the Thioimide intermediate of the active site. Catalysis depends on aspartate 198, which acts as the Proton donor. 231–232 (HE) serves as a coordination point for substrate. Residue 260–261 (RG) participates in NADPH binding.

It belongs to the GTP cyclohydrolase I family. QueF type 2 subfamily. In terms of assembly, homodimer.

The protein localises to the cytoplasm. The catalysed reaction is 7-aminomethyl-7-carbaguanine + 2 NADP(+) = 7-cyano-7-deazaguanine + 2 NADPH + 3 H(+). Its pathway is tRNA modification; tRNA-queuosine biosynthesis. Catalyzes the NADPH-dependent reduction of 7-cyano-7-deazaguanine (preQ0) to 7-aminomethyl-7-deazaguanine (preQ1). The chain is NADPH-dependent 7-cyano-7-deazaguanine reductase from Psychrobacter arcticus (strain DSM 17307 / VKM B-2377 / 273-4).